Reading from the N-terminus, the 79-residue chain is Cell division protein ZapB (79 aa).

Residues 4–78 adopt a coiled-coil conformation; it reads EVFEKLEAKV…LQALLGKMEE (75 aa).

This sequence belongs to the ZapB family. As to quaternary structure, homodimer. The ends of the coiled-coil dimer bind to each other, forming polymers. Interacts with FtsZ.

The protein resides in the cytoplasm. Its function is as follows. Non-essential, abundant cell division factor that is required for proper Z-ring formation. It is recruited early to the divisome by direct interaction with FtsZ, stimulating Z-ring assembly and thereby promoting cell division earlier in the cell cycle. Its recruitment to the Z-ring requires functional FtsA or ZipA. The sequence is that of Cell division protein ZapB from Cronobacter sakazakii (strain ATCC BAA-894) (Enterobacter sakazakii).